A 119-amino-acid chain; its full sequence is NADH dehydrogenase [ubiquinone] 1 subunit C2 (119 aa).

Residues 56-75 traverse the membrane as a helical segment; it reads GLHRQLLYITAFFFAGYYLV.

This sequence belongs to the complex I NDUFC2 subunit family. As to quaternary structure, complex I is composed of 45 different subunits. Interacts with TMEM242.

The protein localises to the mitochondrion inner membrane. Its function is as follows. Accessory subunit of the mitochondrial membrane respiratory chain NADH dehydrogenase (Complex I), that is believed not to be involved in catalysis but required for the complex assembly. Complex I functions in the transfer of electrons from NADH to the respiratory chain. The immediate electron acceptor for the enzyme is believed to be ubiquinone. This is NADH dehydrogenase [ubiquinone] 1 subunit C2 from Gorilla gorilla gorilla (Western lowland gorilla).